The chain runs to 335 residues: Trans-1,2-dihydrobenzene-1,2-diol dehydrogenase (335 aa).

It belongs to the Gfo/Idh/MocA family. Homodimer.

The enzyme catalyses (1R,2R)-1,2-dihydrobenzene-1,2-diol + NADP(+) = catechol + NADPH + H(+). The catalysed reaction is D-xylose + NADP(+) = D-xylono-1,5-lactone + NADPH + H(+). The sequence is that of Trans-1,2-dihydrobenzene-1,2-diol dehydrogenase (DHDH) from Bos taurus (Bovine).